Consider the following 329-residue polypeptide: MKGELRSLLLPELRLFNEAIKGILSSPLSGKLGIAVSGGSDSLALLLLGAVSDFPVEAVTVDHGMRPEAAEEARFVAQICQQIGVPHQILTTKIEANGEGMQAAARIRRYALMAEWAKEKNVGALMTAHHADDQAETFLMRAARGSGLNGLAAIRPDVVITAEGQKLRLLRPLLGFTRSALAEIVEKAGFTFVSDPSNDNPHYDRTHFRRLLKASPWINRQHIAEAARYCQQSEEAIEWITAKEAAARIRKKGEVLYLDPTELPIEILRRLVLRAMETITGNTALRGSALSRFIRSLQQGKKVMLADVIGQGGEYWRFYRAPPRKKAVL.

37-42 (SGGSDS) is a binding site for ATP.

The protein belongs to the tRNA(Ile)-lysidine synthase family.

Its subcellular location is the cytoplasm. It carries out the reaction cytidine(34) in tRNA(Ile2) + L-lysine + ATP = lysidine(34) in tRNA(Ile2) + AMP + diphosphate + H(+). Functionally, ligates lysine onto the cytidine present at position 34 of the AUA codon-specific tRNA(Ile) that contains the anticodon CAU, in an ATP-dependent manner. Cytidine is converted to lysidine, thus changing the amino acid specificity of the tRNA from methionine to isoleucine. The sequence is that of tRNA(Ile)-lysidine synthase from Zymomonas mobilis subsp. mobilis (strain ATCC 31821 / ZM4 / CP4).